The chain runs to 273 residues: Cyclic di-AMP synthase CdaA (273 aa).

Transmembrane regions (helical) follow at residues 12 to 32 (LGNA…IMVI), 40 to 60 (LLKG…LGLS), and 61 to 81 (TLQW…IIIF). The region spanning 82 to 242 (QPELRRALEQ…NGDLHRELTE (161 aa)) is the DAC domain.

Belongs to the adenylate cyclase family. DacA/CdaA subfamily. In terms of assembly, probably a homodimer. Interacts with CdaR. May interact with GlmM.

The protein resides in the cell membrane. It catalyses the reaction 2 ATP = 3',3'-c-di-AMP + 2 diphosphate. With respect to regulation, DAC activity is stimulated about 20-fold in E.coli by coexpression with CdaR. Its function is as follows. One of 3 paralogous diadenylate cyclases (DAC) in this bacteria, catalyzing the condensation of 2 ATP molecules into cyclic di-AMP (c-di-AMP). Upon expression in E.coli leads to c-di-AMP synthesis. Probably the main producer of c-di-AMP for the cell; is probably implicated in control of peptidoglycan synthesis. In B.subtilis c-di-AMP is a second messenger that mediates growth, DNA repair and cell wall homeostasis; it is toxic when present in excess. This Bacillus subtilis (strain 168) protein is Cyclic di-AMP synthase CdaA.